We begin with the raw amino-acid sequence, 85 residues long: Large ribosomal subunit protein bL27 (85 aa).

Gly residues predominate over residues 1–10 (MAQKKGGGST). A disordered region spans residues 1–20 (MAQKKGGGSTRNGRDSKPKM).

This sequence belongs to the bacterial ribosomal protein bL27 family.

This Delftia acidovorans (strain DSM 14801 / SPH-1) protein is Large ribosomal subunit protein bL27.